Here is a 51-residue protein sequence, read N- to C-terminus: MREKIRLVSSAKTGHFYTTTKNKRLHPEKIEIKKFDPVVRKHVVYKEAKIK.

Belongs to the bacterial ribosomal protein bL33 family.

This is Large ribosomal subunit protein bL33 from Ruthia magnifica subsp. Calyptogena magnifica.